A 166-amino-acid polypeptide reads, in one-letter code: UPF0336 protein ML1908 (166 aa).

It belongs to the UPF0336 family.

The polypeptide is UPF0336 protein ML1908 (Mycobacterium leprae (strain TN)).